Consider the following 138-residue polypeptide: Cell division protein SepF (138 aa).

It belongs to the SepF family. Homodimer. Interacts with FtsZ.

Its subcellular location is the cytoplasm. Functionally, cell division protein that is part of the divisome complex and is recruited early to the Z-ring. Probably stimulates Z-ring formation, perhaps through the cross-linking of FtsZ protofilaments. Its function overlaps with FtsA. This is Cell division protein SepF from Limosilactobacillus reuteri (strain DSM 20016) (Lactobacillus reuteri).